We begin with the raw amino-acid sequence, 245 residues long: Pyridoxine 5'-phosphate synthase (245 aa).

3-amino-2-oxopropyl phosphate is bound at residue Asn-7. 9-10 serves as a coordination point for 1-deoxy-D-xylulose 5-phosphate; sequence DH. Arg-18 contacts 3-amino-2-oxopropyl phosphate. The active-site Proton acceptor is His-43. 1-deoxy-D-xylulose 5-phosphate contacts are provided by Arg-45 and His-50. The active-site Proton acceptor is the Glu-70. Thr-100 is a 1-deoxy-D-xylulose 5-phosphate binding site. His-190 serves as the catalytic Proton donor. 3-amino-2-oxopropyl phosphate is bound by residues Gly-191 and 212–213; that span reads GH.

Belongs to the PNP synthase family. In terms of assembly, homooctamer; tetramer of dimers.

Its subcellular location is the cytoplasm. It carries out the reaction 3-amino-2-oxopropyl phosphate + 1-deoxy-D-xylulose 5-phosphate = pyridoxine 5'-phosphate + phosphate + 2 H2O + H(+). It participates in cofactor biosynthesis; pyridoxine 5'-phosphate biosynthesis; pyridoxine 5'-phosphate from D-erythrose 4-phosphate: step 5/5. In terms of biological role, catalyzes the complicated ring closure reaction between the two acyclic compounds 1-deoxy-D-xylulose-5-phosphate (DXP) and 3-amino-2-oxopropyl phosphate (1-amino-acetone-3-phosphate or AAP) to form pyridoxine 5'-phosphate (PNP) and inorganic phosphate. The polypeptide is Pyridoxine 5'-phosphate synthase (Prochlorococcus marinus (strain NATL2A)).